The following is a 699-amino-acid chain: Elongation factor G (699 aa).

A tr-type G domain is found at 8–288 (EDYRNFGIMA…AVVDYLPSPM (281 aa)). GTP contacts are provided by residues 17–24 (AHIDAGKT), 86–90 (DTPGH), and 140–143 (NKMD).

This sequence belongs to the TRAFAC class translation factor GTPase superfamily. Classic translation factor GTPase family. EF-G/EF-2 subfamily.

It localises to the cytoplasm. Catalyzes the GTP-dependent ribosomal translocation step during translation elongation. During this step, the ribosome changes from the pre-translocational (PRE) to the post-translocational (POST) state as the newly formed A-site-bound peptidyl-tRNA and P-site-bound deacylated tRNA move to the P and E sites, respectively. Catalyzes the coordinated movement of the two tRNA molecules, the mRNA and conformational changes in the ribosome. The polypeptide is Elongation factor G (Rhizobium leguminosarum bv. trifolii (strain WSM2304)).